Consider the following 518-residue polypeptide: Membrane-bound lytic murein transglycosylase F (518 aa).

Positions 1–21 (MKKLKINYLFIGILALLLAVA) are cleaved as a signal peptide. Positions 22 to 269 (LWPSIPWFGK…RIEEKYLGHG (248 aa)) are non-LT domain. An LT domain region spans residues 270-518 (DDFDYVDTRT…SRKGSEEKQN (249 aa)). Residue Glu-314 is part of the active site.

It in the N-terminal section; belongs to the bacterial solute-binding protein 3 family. In the C-terminal section; belongs to the transglycosylase Slt family.

The protein localises to the cell outer membrane. It carries out the reaction Exolytic cleavage of the (1-&gt;4)-beta-glycosidic linkage between N-acetylmuramic acid (MurNAc) and N-acetylglucosamine (GlcNAc) residues in peptidoglycan, from either the reducing or the non-reducing ends of the peptidoglycan chains, with concomitant formation of a 1,6-anhydrobond in the MurNAc residue.. Functionally, murein-degrading enzyme that degrades murein glycan strands and insoluble, high-molecular weight murein sacculi, with the concomitant formation of a 1,6-anhydromuramoyl product. Lytic transglycosylases (LTs) play an integral role in the metabolism of the peptidoglycan (PG) sacculus. Their lytic action creates space within the PG sacculus to allow for its expansion as well as for the insertion of various structures such as secretion systems and flagella. This Escherichia coli O157:H7 protein is Membrane-bound lytic murein transglycosylase F.